The chain runs to 322 residues: Secreted effector protein SseI (322 aa).

Interacts with host IQGAP1 and host TRIP6 (thyroid receptor-interacting protein 6).

It localises to the secreted. The protein localises to the host cytoplasm. Effector proteins function to alter host cell physiology and promote bacterial survival in host tissues. This protein is required to maintain a long-term chronic systemic infection in mice. It inhibits normal cell migration of primary macrophages and dendritic cells, by a mechanism that involves interaction with the host factor IQGAP1, an important regulator of the cytoskeleton and cell migration. Also accelerates the systemic spread of infection from the gastrointestinal tract to the bloodstream, probably by interacting with host TRIP6. This Salmonella typhimurium (strain LT2 / SGSC1412 / ATCC 700720) protein is Secreted effector protein SseI (sseI).